Reading from the N-terminus, the 88-residue chain is uncharacterized protein (88 aa).

This is an uncharacterized protein from Treponema pallidum (strain Nichols).